The chain runs to 461 residues: MSHPQSHRYFSVNAPAGGERHLALDEKGVLCLTVVDPATRKLLIPLSCVYPTQAQQRTTIPSLCQLFLNGRCRQGTQCHQVHAALDVVAALRSQVDYLPICCALHGDRDYVNALDNRSWMSRVVVHVPDATYGGGYIPLARFSYTTPISRILREVNARLESGVSVAAVDGGGHPKRMVLNACDFKICGLHTLDRCRYAEECIFLHICKEIVVDVNNGSGDYSLTSQARDGGEPGPRGAKKGSVFVSVSRQQRVRGRPLSYPTVEYQTPFPLRSYEGSMSYNAVSDINSDCSWVSGRYPTGAYMESRMDAAPLPSLAPRFVQGHPGVPRCYSSTTTSTTTTAAAREDAAMYGAGGCWDRWSSPESGCAPCAFVGSCSDCHYADNNNYSGCNGYAYGSRNGYGSDGPNCYFCPGDECSSTHLCPNGTSSSVPQPVESVSSASVSARAWQHNPYGVTPTGGISD.

C3H1-type zinc fingers lie at residues 63-85 (LCQL…HAAL) and 181-208 (ACDF…HICK). Residues 224–243 (TSQARDGGEPGPRGAKKGSV) are disordered. An MKT1-binding motif motif is present at residues 446–451 (WQHNPY).

Its function is as follows. RNA-binding protein involved in regulation of mRNA stability. Promotes mRNA stabilization by recruiting MKT1 and PBP1. Stabilizes transcripts encoding mitochondrial proteins. This chain is RNA-binding protein ZCH321, found in Trypanosoma brucei brucei (strain 927/4 GUTat10.1).